The following is an 869-amino-acid chain: Ubiquitin carboxyl-terminal hydrolase 29 (869 aa).

Composition is skewed to polar residues over residues 104–120 (SSTPCESQQPMEPMSSQ) and 140–150 (SLNTTPESGTP). The tract at residues 104–226 (SSTPCESQQP…KAVTLREQEK (123 aa)) is disordered. Residues 187-200 (VNKDIPKENTPDQK) are compositionally biased toward basic and acidic residues. Positions 201–212 (KKSRRYYSRNRG) are enriched in basic residues. A compositionally biased stretch (basic and acidic residues) spans 213 to 226 (GKAEKAVTLREQEK). Residues 289-826 (EGFPNLGNTC…SGYIFFYMHN (538 aa)) form the USP domain. Cys298 serves as the catalytic Nucleophile. The tract at residues 723-754 (SQEDPEKDLSRSPELQEDDPHSFAFGSDDSKD) is disordered. The active-site Proton acceptor is the His781.

It belongs to the peptidase C19 family. As to expression, predominantly expressed in brain and testis. Highest expression levels in adult brain, especially in the cerebral cortex and hippocampus, and in the forebrain, face, and limb buds of midgestation mouse embryos.

Its subcellular location is the cytoplasm. It is found in the perinuclear region. It catalyses the reaction Thiol-dependent hydrolysis of ester, thioester, amide, peptide and isopeptide bonds formed by the C-terminal Gly of ubiquitin (a 76-residue protein attached to proteins as an intracellular targeting signal).. Functionally, deubiquitinase involved in innate antiviral immunity by mediating 'Lys-48'-linked deubiquitination of CGAS, thereby promoting its stabilization. The sequence is that of Ubiquitin carboxyl-terminal hydrolase 29 from Mus musculus (Mouse).